Here is a 93-residue protein sequence, read N- to C-terminus: Protamine-3 (93 aa).

Residues 1-93 form a disordered region; it reads MGSRCAKLGT…QSPEPKQTRS (93 aa). Positions 37–57 are enriched in acidic residues; that stretch reads EGEEEEEGEEEEEEEGEEEEL. A compositionally biased stretch (polar residues) spans 81–93; sequence EVQQSPEPKQTRS. A Phosphoserine modification is found at S85.

Belongs to the protamine P3 family.

The protein localises to the nucleus. It is found in the chromosome. Protamines substitute for histones in the chromatin of sperm during the haploid phase of spermatogenesis. They compact sperm DNA into a highly condensed, stable and inactive complex. This is Protamine-3 (PRM3) from Bos taurus (Bovine).